Reading from the N-terminus, the 265-residue chain is MAVITMKQLLEAGVHFGHQTRRWNPKMKKYIFTERNGIYIIDLQKTVKLIDDAYDFIKDAASDDGVVLFVGTKKQAQEAIEEEAKRAGQYYVNHRWLGGTLTNWNTIQKRIKKLKEIKAMAEDGTFDRLPKKEVALLIKQRDRLEKFLGGIEDMPRIPDVLFIVDPRKERIAVKEAQKLNIPIVAMVDTNADPDEIDVKIPSNDDAIRAVRLITSKMADAIIEGRQGEDDAPVTEDTFENTDDQVDSIEDIVEVVEGDNDSTDAE.

Belongs to the universal ribosomal protein uS2 family.

The protein is Small ribosomal subunit protein uS2 of Ligilactobacillus salivarius (strain UCC118) (Lactobacillus salivarius).